The chain runs to 359 residues: NADH-quinone oxidoreductase subunit H (359 aa).

The next 8 helical transmembrane spans lie at 19 to 39 (IGWF…FIAL), 94 to 114 (FLFV…FAVL), 127 to 147 (VGLF…LAAG), 166 to 186 (IVSY…LAGT), 202 to 222 (FMHW…IYFI), 266 to 286 (MFMV…SPLP), 301 to 321 (VWGA…QMWL), and 337 to 357 (CWKV…IWVI).

Belongs to the complex I subunit 1 family. In terms of assembly, NDH-1 is composed of 14 different subunits. Subunits NuoA, H, J, K, L, M, N constitute the membrane sector of the complex.

The protein localises to the cell inner membrane. It carries out the reaction a quinone + NADH + 5 H(+)(in) = a quinol + NAD(+) + 4 H(+)(out). In terms of biological role, NDH-1 shuttles electrons from NADH, via FMN and iron-sulfur (Fe-S) centers, to quinones in the respiratory chain. The immediate electron acceptor for the enzyme in this species is believed to be ubiquinone. Couples the redox reaction to proton translocation (for every two electrons transferred, four hydrogen ions are translocated across the cytoplasmic membrane), and thus conserves the redox energy in a proton gradient. This subunit may bind ubiquinone. The protein is NADH-quinone oxidoreductase subunit H of Chlorobaculum parvum (strain DSM 263 / NCIMB 8327) (Chlorobium vibrioforme subsp. thiosulfatophilum).